We begin with the raw amino-acid sequence, 92 residues long: Large ribosomal subunit protein bL27 (92 aa).

The propeptide occupies 1–10 (MLLQLQIQLF).

It belongs to the bacterial ribosomal protein bL27 family. Post-translationally, the N-terminus is cleaved by ribosomal processing cysteine protease Prp.

This Aster yellows witches'-broom phytoplasma (strain AYWB) protein is Large ribosomal subunit protein bL27.